The following is a 354-amino-acid chain: Probable L-ascorbate-6-phosphate lactonase UlaG (354 aa).

This sequence belongs to the UlaG family. A divalent metal cation is required as a cofactor.

The protein resides in the cytoplasm. It carries out the reaction L-ascorbate 6-phosphate + H2O = 3-dehydro-L-gulonate 6-phosphate. It functions in the pathway cofactor degradation; L-ascorbate degradation; D-xylulose 5-phosphate from L-ascorbate: step 1/4. In terms of biological role, probably catalyzes the hydrolysis of L-ascorbate-6-P into 3-keto-L-gulonate-6-P. Is essential for L-ascorbate utilization under anaerobic conditions. This chain is Probable L-ascorbate-6-phosphate lactonase UlaG, found in Salmonella gallinarum (strain 287/91 / NCTC 13346).